A 435-amino-acid chain; its full sequence is Serine--tRNA ligase (435 aa).

Position 241–243 (241–243 (TAE)) interacts with L-serine. Position 272-274 (272-274 (RSE)) interacts with ATP. Glu295 is an L-serine binding site. Residue 359–362 (EISS) participates in ATP binding. Residue Ser395 coordinates L-serine.

It belongs to the class-II aminoacyl-tRNA synthetase family. Type-1 seryl-tRNA synthetase subfamily. As to quaternary structure, homodimer. The tRNA molecule binds across the dimer.

Its subcellular location is the cytoplasm. The catalysed reaction is tRNA(Ser) + L-serine + ATP = L-seryl-tRNA(Ser) + AMP + diphosphate + H(+). It carries out the reaction tRNA(Sec) + L-serine + ATP = L-seryl-tRNA(Sec) + AMP + diphosphate + H(+). The protein operates within aminoacyl-tRNA biosynthesis; selenocysteinyl-tRNA(Sec) biosynthesis; L-seryl-tRNA(Sec) from L-serine and tRNA(Sec): step 1/1. Its function is as follows. Catalyzes the attachment of serine to tRNA(Ser). Is also able to aminoacylate tRNA(Sec) with serine, to form the misacylated tRNA L-seryl-tRNA(Sec), which will be further converted into selenocysteinyl-tRNA(Sec). This Actinobacillus pleuropneumoniae serotype 5b (strain L20) protein is Serine--tRNA ligase.